We begin with the raw amino-acid sequence, 186 residues long: Putative glutathione-dependent formaldehyde-activating enzyme (186 aa).

The region spanning 20-166 is the CENP-V/GFA domain; sequence FSGGKLRCKC…FKSIGLETYD (147 aa). Cys-27, Cys-29, Cys-48, Cys-50, Cys-53, Cys-95, and Cys-98 together coordinate Zn(2+).

It belongs to the Gfa family. Requires Zn(2+) as cofactor.

It catalyses the reaction S-(hydroxymethyl)glutathione = glutathione + formaldehyde. It functions in the pathway one-carbon metabolism; formaldehyde degradation; formate from formaldehyde (glutathione route): step 1/3. Its function is as follows. Catalyzes the condensation of formaldehyde and glutathione to S-hydroxymethylglutathione. This chain is Putative glutathione-dependent formaldehyde-activating enzyme, found in Fusarium vanettenii (strain ATCC MYA-4622 / CBS 123669 / FGSC 9596 / NRRL 45880 / 77-13-4) (Fusarium solani subsp. pisi).